We begin with the raw amino-acid sequence, 120 residues long: V-type proton ATPase subunit F (120 aa).

It belongs to the V-ATPase F subunit family. V-ATPase is a heteromultimeric enzyme composed of a peripheral catalytic V1 complex (components A to H) attached to an integral membrane V0 proton pore complex (components: a, c, c', c'', d, e, f and VOA1).

The protein localises to the vacuole membrane. Functionally, subunit of the V1 complex of vacuolar(H+)-ATPase (V-ATPase), a multisubunit enzyme composed of a peripheral complex (V1) that hydrolyzes ATP and a membrane integral complex (V0) that translocates protons. V-ATPase is responsible for acidifying and maintaining the pH of intracellular compartments. The sequence is that of V-type proton ATPase subunit F from Schizosaccharomyces pombe (strain 972 / ATCC 24843) (Fission yeast).